The chain runs to 426 residues: MAGGHRLLLENARQVVLVCARGERFLTRDALRSLEVLEGASLVVGTDGFIKAIGPADAIQKQFSEETFEERIDCSGKCILPGLVDAHTHPVWAGERVHEFAMKLAGATYMDIHQAGGGINFTVERTRQASEEELYSSFQQRLGCMMRAGTTLVECKSGYGLNLETELKMLRVIERARQELDIGISATYCGAHSVPKGKTASEAADDIIKNHLPRLKELGRNGEIHVDNIDVFCEKDVFDLDSTRRILQSGKDIGLQINFHGDELHPMKAAELGVELGAQAISHLEEVSDEGIAAMASARCSAVLLPTTAYMLRLKQPRARKMLDEGVIVALGSDFNPNAYCFSMPMVMHLACVNMRMSMPEALAAATINAAYALGKSHTQGSLEVGKQGDLIIINSPRWEHLIYQFGGHHELIDYVIAKGKVIYKK.

4-imidazolone-5-propanoate is bound by residues Y159 and H192. Y159 is a binding site for N-formimidoyl-L-glutamate. H260 is a Fe(3+) binding site. Residue H260 coordinates Zn(2+). Residue E263 participates in 4-imidazolone-5-propanoate binding. Residue D334 participates in Fe(3+) binding. D334 contributes to the Zn(2+) binding site. N336 serves as a coordination point for N-formimidoyl-L-glutamate.

This sequence belongs to the metallo-dependent hydrolases superfamily. HutI family. Requires Zn(2+) as cofactor. It depends on Fe(3+) as a cofactor.

It carries out the reaction 4-imidazolone-5-propanoate + H2O = N-formimidoyl-L-glutamate. It functions in the pathway amino-acid degradation; L-histidine degradation into L-glutamate; N-formimidoyl-L-glutamate from L-histidine: step 3/3. The sequence is that of Probable imidazolonepropionase (AMDHD1) from Bos taurus (Bovine).